The following is a 156-amino-acid chain: Transcription antitermination protein NusB (156 aa).

The protein belongs to the NusB family.

Functionally, involved in transcription antitermination. Required for transcription of ribosomal RNA (rRNA) genes. Binds specifically to the boxA antiterminator sequence of the ribosomal RNA (rrn) operons. The chain is Transcription antitermination protein NusB from Bartonella tribocorum (strain CIP 105476 / IBS 506).